A 117-amino-acid chain; its full sequence is Conotoxin vil14a (117 aa).

The N-terminal stretch at 1–22 (MGFRVLVLVVMATTSALPFTFS) is a signal peptide. The propeptide occupies 23–90 (EEPGRSPFRP…FAETPVGQKR (68 aa)). The tract at residues 53 to 86 (RADGQPPDMRQPEMRRPEMRRPEVRQPEFAETPV) is disordered. A compositionally biased stretch (basic and acidic residues) spans 62–80 (RQPEMRRPEMRRPEVRQPE). Disulfide bonds link Cys-96–Cys-116 and Cys-100–Cys-112.

Belongs to the conotoxin R superfamily. Expressed by the venom duct.

Its subcellular location is the secreted. In Conus villepinii (Villepin's cone), this protein is Conotoxin vil14a.